We begin with the raw amino-acid sequence, 383 residues long: MYFLVADHREHHVIPFLKTDFHHMHQNPIQKNQALLEIKQLFTGDYLICKSPSTILACIERKTYKDFAASLKDGRYQNRQKMLLLREQTKCQLYFFVEGPAFPNPQKKINHVAYASIITAMTHLMVRDHIFIIQTKNEAHSSQKLMQLFYAFSKEMVCVVPTSLTPTDEELCIKLWSSLSGISGVIGKIMANTCSVAHLVSGKLPSQNIDQLKTPSNRPFPKKVKRMLINISKGNKELEIKLLSGVPNIGKKLAAEILKDHALLFFLNQPVECLANIQIIQKTRTIKLGMKRAEAIHYFLNWCGSARVTVDSQNITEASRPIMQPATMQLATTQPLHKVSDEASENASHDASENASDKVSSPTGHQTISKYISKEISLNTAAK.

Residues 3–101 (FLVADHREHH…QLYFFVEGPA (99 aa)) form the ERCC4 domain. The segment at 336-367 (LHKVSDEASENASHDASENASDKVSSPTGHQT) is disordered. The span at 347-356 (ASHDASENAS) shows a compositional bias: basic and acidic residues. The segment covering 357–367 (DKVSSPTGHQT) has biased composition (polar residues).

This sequence belongs to the asfivirus EP364R family.

Its function is as follows. Plays a role in the inhibition of type I interferon signaling pathway. Mechanistically, specifically interacts with 2',3'-cGAMP and cleaves it via its phosphodiesterase activity. In turn, prevents 2',3'-cGAMP interaction with host ER-resident STING1 leading to inhibition of downstream signaling pathway and type I interferon production. The sequence is that of ERCC4 domain-containing protein EP364R from Ornithodoros (relapsing fever ticks).